Here is a 61-residue protein sequence, read N- to C-terminus: Small ribosomal subunit protein uS14B (61 aa).

Zn(2+) is bound by residues Cys-24, Cys-27, Cys-40, and Cys-43.

Belongs to the universal ribosomal protein uS14 family. Zinc-binding uS14 subfamily. In terms of assembly, part of the 30S ribosomal subunit. Contacts proteins S3 and S10. It depends on Zn(2+) as a cofactor.

Its function is as follows. Binds 16S rRNA, required for the assembly of 30S particles and may also be responsible for determining the conformation of the 16S rRNA at the A site. The sequence is that of Small ribosomal subunit protein uS14B from Limosilactobacillus reuteri (strain DSM 20016) (Lactobacillus reuteri).